The chain runs to 481 residues: UDP-N-acetylmuramoyl-L-alanyl-D-glutamate--L-lysine ligase (481 aa).

Serine 42 provides a ligand contact to UDP-N-acetyl-alpha-D-muramoyl-L-alanyl-D-glutamate. Residue 118-124 (GTKGKTT) participates in ATP binding. Residues glutamine 158, 160 to 161 (TT), serine 187, and arginine 195 each bind UDP-N-acetyl-alpha-D-muramoyl-L-alanyl-D-glutamate. At lysine 229 the chain carries N6-carboxylysine. The L-lysine recognition motif motif lies at 404 to 407 (DDPN).

It belongs to the MurCDEF family. MurE subfamily. In terms of processing, carboxylation is probably crucial for Mg(2+) binding and, consequently, for the gamma-phosphate positioning of ATP.

The protein resides in the cytoplasm. The enzyme catalyses UDP-N-acetyl-alpha-D-muramoyl-L-alanyl-D-glutamate + L-lysine + ATP = UDP-N-acetyl-alpha-D-muramoyl-L-alanyl-gamma-D-glutamyl-L-lysine + ADP + phosphate + H(+). The protein operates within cell wall biogenesis; peptidoglycan biosynthesis. Its function is as follows. Catalyzes the addition of L-lysine to the nucleotide precursor UDP-N-acetylmuramoyl-L-alanyl-D-glutamate (UMAG) in the biosynthesis of bacterial cell-wall peptidoglycan. The chain is UDP-N-acetylmuramoyl-L-alanyl-D-glutamate--L-lysine ligase from Streptococcus pyogenes serotype M3 (strain SSI-1).